A 66-amino-acid chain; its full sequence is Large ribosomal subunit protein uL29 (66 aa).

Belongs to the universal ribosomal protein uL29 family.

This is Large ribosomal subunit protein uL29 from Hydrogenobaculum sp. (strain Y04AAS1).